The primary structure comprises 330 residues: PTS system mannose-specific EIIAB component (330 aa).

In terms of domain architecture, PTS EIIA type-4 spans 2–130; that stretch reads GIGIIIASHG…NIIKESKDGI (129 aa). Histidine 10 (tele-phosphohistidine intermediate; for EIIA activity) is an active-site residue. Position 10 is a phosphohistidine; by HPr (histidine 10). Positions 143-161 are hinge; the sequence is TAATEKVVNALQGAIPAGT. Positions 166-330 constitute a PTS EIIB type-4 domain; that stretch reads GKLKINLARV…FELIQKANIK (165 aa). Catalysis depends on histidine 181, which acts as the Pros-phosphohistidine intermediate; for EIIB activity. Position 181 is a phosphohistidine; by EIIA (histidine 181).

Homodimer.

Its subcellular location is the cytoplasm. The protein resides in the cell membrane. It carries out the reaction D-mannose(out) + N(pros)-phospho-L-histidyl-[protein] = D-mannose 6-phosphate(in) + L-histidyl-[protein]. Functionally, the phosphoenolpyruvate-dependent sugar phosphotransferase system (sugar PTS), a major carbohydrate active transport system, catalyzes the phosphorylation of incoming sugar substrates concomitantly with their translocation across the cell membrane. The enzyme II ManXYZ PTS system is involved in mannose transport. The chain is PTS system mannose-specific EIIAB component from Streptococcus pyogenes serotype M6 (strain ATCC BAA-946 / MGAS10394).